Here is a 234-residue protein sequence, read N- to C-terminus: Adenylate dimethylallyltransferase (234 aa).

Belongs to the isopentenyl transferase family.

It catalyses the reaction dimethylallyl diphosphate + AMP = N(6)-(dimethylallyl)adenosine 5'-phosphate + diphosphate. Functionally, transfers dimethylallyl groups to AMP as part of the biosynthesis of cytokinin phytohormones. This is Adenylate dimethylallyltransferase (ptz) from Pseudomonas savastanoi (Pseudomonas syringae pv. savastanoi).